We begin with the raw amino-acid sequence, 585 residues long: Auxin response factor 17 (585 aa).

Residues 119 to 221 constitute a DNA-binding region (TF-B3); that stretch reads FAKILTPSDA…EMFIGVRRTP (103 aa). Disordered stretches follow at residues 483-517 and 535-585; these read EMMN…RGPL and EHSE…SSQG. Over residues 488-510 the composition is skewed to low complexity; it reads GSPPSDNLSPNSNTTNLSSGNDL. Positions 573-585 are enriched in polar residues; it reads KHSNSNAGSSSQG.

This sequence belongs to the ARF family. In terms of assembly, homo and heterodimers.

The protein resides in the nucleus. Its function is as follows. Auxin response factors (ARFs) are transcriptional factors that bind specifically to the DNA sequence 5'-TGTCTC-3' found in the auxin-responsive promoter elements (AuxREs). Could act as transcriptional activator or repressor. Formation of heterodimers with Aux/IAA proteins may alter their ability to modulate early auxin response genes expression. This Arabidopsis thaliana (Mouse-ear cress) protein is Auxin response factor 17 (ARF17).